Here is a 1006-residue protein sequence, read N- to C-terminus: Probable beta-galactosidase A (1006 aa).

Positions M1 to G18 are cleaved as a signal peptide. Substrate-binding residues include Y96, N140, A141, and E142. N-linked (GlcNAc...) asparagine glycosylation occurs at N156. N199 is a substrate binding site. The active-site Proton donor is E200. The cysteines at positions 205 and 206 are disulfide-linked. N207 carries an N-linked (GlcNAc...) asparagine glycan. Y260 provides a ligand contact to substrate. C266 and C315 are joined by a disulfide. The active-site Nucleophile is the E298. Y364 provides a ligand contact to substrate. 6 N-linked (GlcNAc...) asparagine glycosylation sites follow: N373, N402, N422, N622, N777, and N914.

It belongs to the glycosyl hydrolase 35 family.

The protein localises to the secreted. It catalyses the reaction Hydrolysis of terminal non-reducing beta-D-galactose residues in beta-D-galactosides.. Its function is as follows. Cleaves beta-linked terminal galactosyl residues from gangliosides, glycoproteins, and glycosaminoglycans. The chain is Probable beta-galactosidase A (lacA) from Neosartorya fischeri (strain ATCC 1020 / DSM 3700 / CBS 544.65 / FGSC A1164 / JCM 1740 / NRRL 181 / WB 181) (Aspergillus fischerianus).